The primary structure comprises 1048 residues: MEEKPFPAWSWSVDQCLKEYQVKLEKGLSTYEVDKRRERYGLNELEKEKGKPLWRLVLEQFDDTLVKILLGAAFISFVLAYVNQDETGESGFEAYVEPLVILWILVLNAIVGVWQESNAEKALEALKEMQGESAKVLRDGYLVPDFPAKELVPGDIVELRVGDKVPADMRVATLKSSTLRVEQSSLTGESMPVTKSTDFLATDDCELQAKENMVFAGTTVVNGSCICIVVNTGMCTEIGKIQRQIHDASMEESDTPLKKKLDEFGNRLTFAIGVVCLVVWAINYKYFLSWEVVDDWPSDFRFSFEKCAYYFKIAVALAVAAIPEGLPSVITTCLALGTRKMAQKNAIVRKLQSVETLGCTTVICSDKTGTLTTNQMSVSEFFTLGRKTTACRVFGVEGTTYDPKDGGIMNWNCCKMDANLLLMAEICAICNDAGVFCDGRLFKATGLPTEAALKVLVEKMGVPDSKARCKIRDAQIVSSYLIDRNTVKLGCCDWWMKRSKRVATLEFDRVRKSMGVIVREPNGSNRLLVKGAFESLLERSTYVQLADGSTVPLDESCRQLLLLKQLEMSSKGLRCLGLAYKDDLGELSGYYAATHPAHKKLLDPSCYSSIESDLVFVGVVGLRDPPREEVHRAVNDCRRAGIKIMVITGDNKSTAEAVCREIQLFSNGENLRGSSFTGKEFMAFSSQQQIEILSQDGGKVFSRAEPRHKQEIVRMLKEMGEIVAMTGDGVNDAPALKLADIGIAMGITGTEVAKEASDMVLADDNFSTIVSAVAEGRSIYNNMKAFIRYMISSNVGEVISIFLTAVLGIPECLIPVQLLWVNLVTDGPPATALGFNPADVDIMQKPPRKNTDALINSWVFFRYMVIGSYVGIATVGIFIVWYTQASFLGINIVSDGHTLVELSQLRNWGECSTWTNFTVSPFKAGNRLITFSDPCEYFTVGKVKAMTLSLSVLVAIEMFNSLNALSEDNSLIKMPPWRNPWLLVAMSLSFALHSVILYVPFLADIFGIVPLSLYEWLLVILLSAPVILIDEVLKFVGRRRRRTKLKAA.

Over 1 to 63 the chain is Cytoplasmic; sequence MEEKPFPAWS…WRLVLEQFDD (63 aa). Residues 64–84 form a helical membrane-spanning segment; it reads TLVKILLGAAFISFVLAYVNQ. The Lumenal portion of the chain corresponds to 85–93; it reads DETGESGFE. Residues 94–114 traverse the membrane as a helical segment; it reads AYVEPLVILWILVLNAIVGVW. Residues 115–213 lie on the Cytoplasmic side of the membrane; sequence QESNAEKALE…DCELQAKENM (99 aa). Residues 214 to 234 form a helical membrane-spanning segment; sequence VFAGTTVVNGSCICIVVNTGM. The Lumenal portion of the chain corresponds to 235 to 267; it reads CTEIGKIQRQIHDASMEESDTPLKKKLDEFGNR. Residues 268–288 traverse the membrane as a helical segment; the sequence is LTFAIGVVCLVVWAINYKYFL. The Cytoplasmic portion of the chain corresponds to 289-312; that stretch reads SWEVVDDWPSDFRFSFEKCAYYFK. A helical transmembrane segment spans residues 313-333; the sequence is IAVALAVAAIPEGLPSVITTC. Ca(2+) contacts are provided by V319, A320, I322, and E324. The Lumenal portion of the chain corresponds to 334-800; it reads LALGTRKMAQ…ISSNVGEVIS (467 aa). The active-site 4-aspartylphosphate intermediate is D366. Residues D728 and D732 each coordinate Mg(2+). Residues N794 and E797 each contribute to the Ca(2+) site. A helical transmembrane segment spans residues 801 to 821; it reads IFLTAVLGIPECLIPVQLLWV. Residues N822, T825, and D826 each contribute to the Ca(2+) site. The Cytoplasmic portion of the chain corresponds to 822–862; sequence NLVTDGPPATALGFNPADVDIMQKPPRKNTDALINSWVFFR. A helical membrane pass occupies residues 863-883; the sequence is YMVIGSYVGIATVGIFIVWYT. The Lumenal segment spans residues 884–944; the sequence is QASFLGINIV…CEYFTVGKVK (61 aa). A helical transmembrane segment spans residues 945-965; sequence AMTLSLSVLVAIEMFNSLNAL. Ca(2+) is bound at residue E957. The Cytoplasmic segment spans residues 966 to 981; sequence SEDNSLIKMPPWRNPW. Residues 982 to 1002 traverse the membrane as a helical segment; that stretch reads LLVAMSLSFALHSVILYVPFL. Topologically, residues 1003–1007 are lumenal; it reads ADIFG. A helical membrane pass occupies residues 1008–1028; the sequence is IVPLSLYEWLLVILLSAPVIL. The Cytoplasmic portion of the chain corresponds to 1029–1048; the sequence is IDEVLKFVGRRRRRTKLKAA.

This sequence belongs to the cation transport ATPase (P-type) (TC 3.A.3) family. Type IIA subfamily. In terms of tissue distribution, 9-fold higher level in roots compared with leaves.

The protein resides in the endoplasmic reticulum membrane. It catalyses the reaction Ca(2+)(in) + ATP + H2O = Ca(2+)(out) + ADP + phosphate + H(+). Its function is as follows. This magnesium-dependent enzyme catalyzes the hydrolysis of ATP coupled with the translocation of calcium from the cytosol to an endomembrane compartment. The chain is Calcium-transporting ATPase, endoplasmic reticulum-type from Solanum lycopersicum (Tomato).